The following is a 314-amino-acid chain: MIEIEKPRIETIEISEDAKFGKFVVEPLERGYGTTLGNSLRRILLSSLPGAAVKYIEIEGVLHEFSAIDNVVEDVSTIIMNIKKLALKIYSEEDKTLEIDVRDEGEVTASDITHDSDVEVLNPELKIATVSKGGHLKIRLVANKGRGYALAEQNNTSDLPIGVIPVDSLYSPVERVNYTVENTRVGQSSDFDKLTLDVWTNGSITPQESVSLAAKILTEHLNIFVGLTDEAQNAEIMIEKEEDQKEKVLEMSIEELDLSVRSYNCLKRAGINSVQELADKSEADMMKVRNLGRKSLEEVKYKLEDLGLGLRKED.

Positions 1–228 (MIEIEKPRIE…EHLNIFVGLT (228 aa)) are alpha N-terminal domain (alpha-NTD). The alpha C-terminal domain (alpha-CTD) stretch occupies residues 245 to 314 (KEKVLEMSIE…DLGLGLRKED (70 aa)).

This sequence belongs to the RNA polymerase alpha chain family. Homodimer. The RNAP catalytic core consists of 2 alpha, 1 beta, 1 beta' and 1 omega subunit. When a sigma factor is associated with the core the holoenzyme is formed, which can initiate transcription.

It carries out the reaction RNA(n) + a ribonucleoside 5'-triphosphate = RNA(n+1) + diphosphate. Its function is as follows. DNA-dependent RNA polymerase catalyzes the transcription of DNA into RNA using the four ribonucleoside triphosphates as substrates. This chain is DNA-directed RNA polymerase subunit alpha, found in Staphylococcus haemolyticus (strain JCSC1435).